The following is a 504-amino-acid chain: Cytochrome P450 3A11 (504 aa).

Cys443 serves as a coordination point for heme.

This sequence belongs to the cytochrome P450 family. The cofactor is heme. As to expression, highly expressed in liver.

It localises to the endoplasmic reticulum membrane. Its subcellular location is the microsome membrane. It carries out the reaction an organic molecule + reduced [NADPH--hemoprotein reductase] + O2 = an alcohol + oxidized [NADPH--hemoprotein reductase] + H2O + H(+). Functionally, catalyzes erythromycin N-demethylation, nifedipine oxidation and testosterone 6 beta-hydroxylation. The protein is Cytochrome P450 3A11 (Cyp3a11) of Mus musculus (Mouse).